The chain runs to 242 residues: Synaptonemal complex central element protein 1-like (242 aa).

A disordered region spans residues 1–24 (MAGKLKPLNVEAPEATEEAEGQAK). Positions 44–181 (LEPQIEDLIS…LREVERRLHS (138 aa)) form a coiled coil. The interval 206 to 242 (VRSAPEVGAGEGEAGPELPRARDEEDPEPPVAAPDAL) is disordered.

The protein belongs to the SYCE family.

May be involved in meiosis. This Homo sapiens (Human) protein is Synaptonemal complex central element protein 1-like (SYCE1L).